A 535-amino-acid chain; its full sequence is Bifunctional purine biosynthesis protein PurH (535 aa).

The region spanning 6–151 (TRLPIRRALI…KNHKDVAIVV (146 aa)) is the MGS-like domain.

Belongs to the PurH family.

It catalyses the reaction (6R)-10-formyltetrahydrofolate + 5-amino-1-(5-phospho-beta-D-ribosyl)imidazole-4-carboxamide = 5-formamido-1-(5-phospho-D-ribosyl)imidazole-4-carboxamide + (6S)-5,6,7,8-tetrahydrofolate. The enzyme catalyses IMP + H2O = 5-formamido-1-(5-phospho-D-ribosyl)imidazole-4-carboxamide. The protein operates within purine metabolism; IMP biosynthesis via de novo pathway; 5-formamido-1-(5-phospho-D-ribosyl)imidazole-4-carboxamide from 5-amino-1-(5-phospho-D-ribosyl)imidazole-4-carboxamide (10-formyl THF route): step 1/1. It functions in the pathway purine metabolism; IMP biosynthesis via de novo pathway; IMP from 5-formamido-1-(5-phospho-D-ribosyl)imidazole-4-carboxamide: step 1/1. This chain is Bifunctional purine biosynthesis protein PurH, found in Pseudomonas fluorescens (strain SBW25).